The sequence spans 388 residues: Succinate--CoA ligase [ADP-forming] subunit beta (388 aa).

Residues 9 to 244 (KQLFAEYGLP…PSQDDPREAH (236 aa)) enclose the ATP-grasp domain. ATP-binding positions include K46, 53 to 55 (GRG), E99, T102, and E107. Residues N199 and D213 each contribute to the Mg(2+) site. Residues N264 and 321–323 (GIV) contribute to the substrate site.

It belongs to the succinate/malate CoA ligase beta subunit family. Heterotetramer of two alpha and two beta subunits. It depends on Mg(2+) as a cofactor.

The enzyme catalyses succinate + ATP + CoA = succinyl-CoA + ADP + phosphate. The catalysed reaction is GTP + succinate + CoA = succinyl-CoA + GDP + phosphate. Its pathway is carbohydrate metabolism; tricarboxylic acid cycle; succinate from succinyl-CoA (ligase route): step 1/1. Succinyl-CoA synthetase functions in the citric acid cycle (TCA), coupling the hydrolysis of succinyl-CoA to the synthesis of either ATP or GTP and thus represents the only step of substrate-level phosphorylation in the TCA. The beta subunit provides nucleotide specificity of the enzyme and binds the substrate succinate, while the binding sites for coenzyme A and phosphate are found in the alpha subunit. In Pseudomonas fluorescens (strain ATCC BAA-477 / NRRL B-23932 / Pf-5), this protein is Succinate--CoA ligase [ADP-forming] subunit beta.